The chain runs to 489 residues: NAC domain-containing protein 74 (489 aa).

In terms of domain architecture, NAC spans 9-159 (LPPGFGFHPK…AYVLCRITKR (151 aa)). The DNA-binding element occupies 108–165 (IGTKKTLVFHEGRPPTGRRTEWIMHEYYIDERECQACPDMKDAYVLCRITKRNDWIPG). A compositionally biased stretch (basic and acidic residues) spans 413–427 (KNQAHDVASTKRSDA). Residues 413-435 (KNQAHDVASTKRSDAGKPSTELS) form a disordered region. The chain crosses the membrane as a helical span at residues 456 to 476 (WNMILVAGFAIGVAVVALHIG).

As to expression, widely expressed.

Its subcellular location is the nucleus. It is found in the cell membrane. Transcription activator involved in heat and endoplasmic reticulum (ER) stress responses. Regulates the expression of genes involved in ER protein folding and heat stress-responsive genes. Binds directly to the promoter of BZIP74 and regulates its expression in response to heat stress. The polypeptide is NAC domain-containing protein 74 (Oryza sativa subsp. japonica (Rice)).